We begin with the raw amino-acid sequence, 279 residues long: Thymidylate synthase (279 aa).

141–142 (RR) contributes to the dUMP binding site. The Nucleophile role is filled by Cys161. DUMP contacts are provided by residues 181–184 (RSND), Asn192, and 222–224 (HVY). Residue Asp184 participates in (6R)-5,10-methylene-5,6,7,8-tetrahydrofolate binding. Residue Ala278 coordinates (6R)-5,10-methylene-5,6,7,8-tetrahydrofolate.

The protein belongs to the thymidylate synthase family. Homodimer.

The enzyme catalyses dUMP + (6R)-5,10-methylene-5,6,7,8-tetrahydrofolate = 7,8-dihydrofolate + dTMP. It functions in the pathway pyrimidine metabolism; dTTP biosynthesis. Functionally, provides the sole de novo source of dTMP for DNA biosynthesis. The polypeptide is Thymidylate synthase (thyP3) (Bacillus subtilis (Bacteriophage phi-3T)).